The following is a 309-amino-acid chain: Small ribosomal subunit biogenesis GTPase RsgA (309 aa).

Residues 64-225 enclose the CP-type G domain; the sequence is ENELVRPPLA…VADTPGFSTY (162 aa). Residues 113–116 and 168–176 contribute to the GTP site; these read SKTD and GQTGAGKST. Residues cysteine 249, cysteine 254, histidine 256, and cysteine 262 each contribute to the Zn(2+) site.

The protein belongs to the TRAFAC class YlqF/YawG GTPase family. RsgA subfamily. Monomer. Associates with 30S ribosomal subunit, binds 16S rRNA. Zn(2+) serves as cofactor.

It is found in the cytoplasm. Functionally, one of several proteins that assist in the late maturation steps of the functional core of the 30S ribosomal subunit. Helps release RbfA from mature subunits. May play a role in the assembly of ribosomal proteins into the subunit. Circularly permuted GTPase that catalyzes slow GTP hydrolysis, GTPase activity is stimulated by the 30S ribosomal subunit. This Pediococcus pentosaceus (strain ATCC 25745 / CCUG 21536 / LMG 10740 / 183-1w) protein is Small ribosomal subunit biogenesis GTPase RsgA.